The sequence spans 501 residues: Ribose import ATP-binding protein RbsA (501 aa).

ABC transporter domains lie at 6–242 and 253–495; these read LQLS…VGRK and VHGQ…VGKK. 38 to 45 lines the ATP pocket; sequence GENGAGKS.

Belongs to the ABC transporter superfamily. Ribose importer (TC 3.A.1.2.1) family. The complex is composed of an ATP-binding protein (RbsA), two transmembrane proteins (RbsC) and a solute-binding protein (RbsB).

It localises to the cell inner membrane. The catalysed reaction is D-ribose(out) + ATP + H2O = D-ribose(in) + ADP + phosphate + H(+). Its function is as follows. Part of the ABC transporter complex RbsABC involved in ribose import. Responsible for energy coupling to the transport system. The protein is Ribose import ATP-binding protein RbsA of Vibrio vulnificus (strain YJ016).